Reading from the N-terminus, the 223-residue chain is DNA mismatch repair protein MutH (223 aa).

The protein belongs to the MutH family.

Its subcellular location is the cytoplasm. In terms of biological role, sequence-specific endonuclease that cleaves unmethylated GATC sequences. It is involved in DNA mismatch repair. This chain is DNA mismatch repair protein MutH, found in Shewanella sp. (strain W3-18-1).